The sequence spans 135 residues: DNA-binding protein inhibitor ID-2-B (135 aa).

A bHLH domain is found at 23–75; sequence ARSKAPVDEPMSLLYNMNDCYSKLKELVPSIPPNKKVSKMEILQHVIDYILDL. The Nuclear export signal signature appears at 108 to 117; it reads LNTDISILSL.

Heterodimer with other HLH proteins.

It is found in the cytoplasm. It localises to the nucleus. Its function is as follows. Transcriptional regulator (lacking a basic DNA binding domain) which negatively regulates the basic helix-loop-helix (bHLH) transcription factors by forming heterodimers and inhibiting their DNA binding and transcriptional activity. Inhibits the activity of both neurogenic (neurod1/neuroD) and myogenic (myod1/myoD) bHLH factors. May play a role in the regulation of the circadian clock. The chain is DNA-binding protein inhibitor ID-2-B (id2-b) from Xenopus laevis (African clawed frog).